The primary structure comprises 400 residues: Acyl-CoA dehydrogenase FadE26 (400 aa).

Residues 127-130 (IGYS), Thr-136, and Ser-162 each bind FAD. The active-site Proton acceptor is Glu-247. 380–382 (TNE) is a binding site for FAD.

This sequence belongs to the acyl-CoA dehydrogenase family. In terms of assembly, heterotetramer (dimer of heterodimers) composed of FadE26 and FadE27. FAD is required as a cofactor.

It catalyses the reaction (25S)-3-oxocholest-4-en-26-oyl-CoA + A = 3-oxo-cholest-4,24-dien-26-oyl-CoA + AH2. The protein operates within steroid metabolism; cholesterol degradation. Uncompetitively inhibited by high concentration of 3-OCS-CoA. In terms of biological role, involved in the first cycle of side chain dehydrogenation in the beta-oxidation of cholesterol catabolism. It contributes partly to the virulence by increasing the efficiency of beta-oxidation. Catalyzes the dehydrogenation of acyl-CoA ester side chains of (25S)-3-oxo-cholest-4-en-26-oyl-CoA (3-OCS-CoA) to yield (24E)-3-oxo-cholest-4,24-dien-26-oyl-CoA. Also able to dehydrogenate steroyl-CoA such as 3-oxo-chol-4-en-24-oyl-CoA (3-OCO-CoA) as well as 3-oxo-4-pregnene-20-carboxyl-CoA (3-OPC-CoA). It dehydrogenates only (25S)-OCS-CoA diastereomer. In Mycobacterium tuberculosis (strain ATCC 25618 / H37Rv), this protein is Acyl-CoA dehydrogenase FadE26 (fadE26).